The sequence spans 403 residues: Accessory Sec system protein translocase subunit SecY2 (403 aa).

A run of 10 helical transmembrane segments spans residues 17–37, 63–83, 105–125, 131–151, 157–177, 186–206, 240–260, 276–296, 339–359, and 366–386; these read MLYT…SIVS, LNIF…LMLI, ILTL…YVSK, DNIY…VWLA, YGIA…MMHQ, HIVI…LLFI, ITLM…HFIL, FDSP…GYFL, WFGL…TLFV, and IYFS…AETI.

The protein belongs to the SecY/SEC61-alpha family. SecY2 subfamily. May form heterotrimers with SecE and SecG subunits (Potential). Component of the accessory SecA2/SecY2 protein translocase complex required to export cell wall protein SrpA.

Its subcellular location is the cell membrane. Its function is as follows. The central subunit of a protein translocation channel (Potential). Part of the accessory SecA2/SecY2 system specifically required to export SraP, a serine-rich repeat cell wall protein encoded upstream in the same operon. The protein is Accessory Sec system protein translocase subunit SecY2 of Staphylococcus aureus (strain NCTC 8325 / PS 47).